A 202-amino-acid chain; its full sequence is UPF0126 membrane protein YvgT (202 aa).

The next 6 helical transmembrane spans lie at 3–23, 26–46, 63–83, 90–110, 113–133, and 160–180; these read WELL…IVAM, EYDI…GGAI, AYFQ…KLLL, GNLS…LYAV, GHPL…GGII, and IVGL…FVLV.

The protein belongs to the UPF0126 family.

The protein resides in the cell membrane. In Bacillus subtilis (strain 168), this protein is UPF0126 membrane protein YvgT (yvgT).